The primary structure comprises 672 residues: ATP-dependent zinc metalloprotease FtsH 1 (672 aa).

A disordered region spans residues 1-22; it reads MKKDSESNSSDKSNKEELSTGR. Residues 1–23 are Cytoplasmic-facing; that stretch reads MKKDSESNSSDKSNKEELSTGRR. A helical membrane pass occupies residues 24–44; the sequence is GGNPMIIALVITVLAAMLFFN. Residues 45–141 lie on the Periplasmic side of the membrane; that stretch reads QPEPSSLISA…KFSPPDNTAA (97 aa). The chain crosses the membrane as a helical span at residues 142 to 162; sequence ILNLLILVGLPLAIFFFIFMM. Residues 163–672 lie on the Cytoplasmic side of the membrane; that stretch reads IRRTRNDMMG…TSNASARRED (510 aa). 237 to 244 lines the ATP pocket; the sequence is GPPGTGKT. Residue His-458 participates in Zn(2+) binding. Residue Glu-459 is part of the active site. Positions 462 and 534 each coordinate Zn(2+). The disordered stretch occupies residues 642–672; sequence RLGDEEGKVEQIMAPEGAAERTSNASARRED. Positions 662–672 are enriched in polar residues; that stretch reads RTSNASARRED.

The protein in the central section; belongs to the AAA ATPase family. In the C-terminal section; belongs to the peptidase M41 family. As to quaternary structure, homohexamer. The cofactor is Zn(2+).

The protein localises to the cell inner membrane. Functionally, acts as a processive, ATP-dependent zinc metallopeptidase for both cytoplasmic and membrane proteins. Plays a role in the quality control of integral membrane proteins. The chain is ATP-dependent zinc metalloprotease FtsH 1 from Rhodopirellula baltica (strain DSM 10527 / NCIMB 13988 / SH1).